We begin with the raw amino-acid sequence, 303 residues long: N-acetylmuramic acid 6-phosphate etherase (303 aa).

Positions Ile-62–Lys-225 constitute an SIS domain. Glu-90 serves as the catalytic Proton donor. Glu-121 is an active-site residue.

The protein belongs to the GCKR-like family. MurNAc-6-P etherase subfamily. As to quaternary structure, homodimer.

The enzyme catalyses N-acetyl-D-muramate 6-phosphate + H2O = N-acetyl-D-glucosamine 6-phosphate + (R)-lactate. The protein operates within amino-sugar metabolism; 1,6-anhydro-N-acetylmuramate degradation. Its pathway is amino-sugar metabolism; N-acetylmuramate degradation. It participates in cell wall biogenesis; peptidoglycan recycling. Specifically catalyzes the cleavage of the D-lactyl ether substituent of MurNAc 6-phosphate, producing GlcNAc 6-phosphate and D-lactate. Together with AnmK, is also required for the utilization of anhydro-N-acetylmuramic acid (anhMurNAc) either imported from the medium or derived from its own cell wall murein, and thus plays a role in cell wall recycling. In Histophilus somni (strain 129Pt) (Haemophilus somnus), this protein is N-acetylmuramic acid 6-phosphate etherase.